Reading from the N-terminus, the 951-residue chain is Valine--tRNA ligase (951 aa).

The short motif at 42–52 (PNVTGSLHMGH) is the 'HIGH' region element. Positions 554–558 (KMSKS) match the 'KMSKS' region motif. Residue Lys-557 participates in ATP binding. Positions 880–944 (AGLINKEDEL…AEAKAKLIEQ (65 aa)) form a coiled coil.

The protein belongs to the class-I aminoacyl-tRNA synthetase family. ValS type 1 subfamily. In terms of assembly, monomer.

The protein localises to the cytoplasm. The catalysed reaction is tRNA(Val) + L-valine + ATP = L-valyl-tRNA(Val) + AMP + diphosphate. In terms of biological role, catalyzes the attachment of valine to tRNA(Val). As ValRS can inadvertently accommodate and process structurally similar amino acids such as threonine, to avoid such errors, it has a 'posttransfer' editing activity that hydrolyzes mischarged Thr-tRNA(Val) in a tRNA-dependent manner. This chain is Valine--tRNA ligase, found in Shigella dysenteriae serotype 1 (strain Sd197).